The chain runs to 1095 residues: DNA-directed RNA polymerase subunit beta (1095 aa).

The disordered stretch occupies residues 1069 to 1095; the sequence is DLMQDVNPRRSTPSRPTYESLGKEYEE.

This sequence belongs to the RNA polymerase beta chain family. In cyanobacteria the RNAP catalytic core is composed of 2 alpha, 1 beta, 1 beta', 1 gamma and 1 omega subunit. When a sigma factor is associated with the core the holoenzyme is formed, which can initiate transcription.

It carries out the reaction RNA(n) + a ribonucleoside 5'-triphosphate = RNA(n+1) + diphosphate. DNA-dependent RNA polymerase catalyzes the transcription of DNA into RNA using the four ribonucleoside triphosphates as substrates. The polypeptide is DNA-directed RNA polymerase subunit beta (Prochlorococcus marinus (strain NATL1A)).